The following is a 236-amino-acid chain: Large ribosomal subunit protein uL1 (236 aa).

Belongs to the universal ribosomal protein uL1 family. In terms of assembly, part of the 50S ribosomal subunit.

Its function is as follows. Binds directly to 23S rRNA. The L1 stalk is quite mobile in the ribosome, and is involved in E site tRNA release. Functionally, protein L1 is also a translational repressor protein, it controls the translation of the L11 operon by binding to its mRNA. The protein is Large ribosomal subunit protein uL1 of Kocuria rhizophila (strain ATCC 9341 / DSM 348 / NBRC 103217 / DC2201).